The primary structure comprises 139 residues: 3-hydroxyacyl-[acyl-carrier-protein] dehydratase FabZ (139 aa).

His47 is a catalytic residue.

It belongs to the thioester dehydratase family. FabZ subfamily.

The protein resides in the cytoplasm. It catalyses the reaction a (3R)-hydroxyacyl-[ACP] = a (2E)-enoyl-[ACP] + H2O. Functionally, involved in unsaturated fatty acids biosynthesis. Catalyzes the dehydration of short chain beta-hydroxyacyl-ACPs and long chain saturated and unsaturated beta-hydroxyacyl-ACPs. This Oenococcus oeni (strain ATCC BAA-331 / PSU-1) protein is 3-hydroxyacyl-[acyl-carrier-protein] dehydratase FabZ.